A 498-amino-acid polypeptide reads, in one-letter code: Argininosuccinate lyase 1 (498 aa).

This sequence belongs to the lyase 1 family. Argininosuccinate lyase subfamily.

The protein resides in the cytoplasm. It carries out the reaction 2-(N(omega)-L-arginino)succinate = fumarate + L-arginine. It functions in the pathway amino-acid biosynthesis; L-arginine biosynthesis; L-arginine from L-ornithine and carbamoyl phosphate: step 3/3. This chain is Argininosuccinate lyase 1, found in Shouchella clausii (strain KSM-K16) (Alkalihalobacillus clausii).